Here is a 577-residue protein sequence, read N- to C-terminus: Arginine--tRNA ligase (577 aa).

The 'HIGH' region signature appears at 122 to 132; that stretch reads PNVAKEMHVGH.

The protein belongs to the class-I aminoacyl-tRNA synthetase family. As to quaternary structure, monomer.

Its subcellular location is the cytoplasm. It catalyses the reaction tRNA(Arg) + L-arginine + ATP = L-arginyl-tRNA(Arg) + AMP + diphosphate. The sequence is that of Arginine--tRNA ligase from Shigella dysenteriae serotype 1 (strain Sd197).